Reading from the N-terminus, the 1703-residue chain is Protein TIC 214 (1703 aa).

A run of 6 helical transmembrane segments spans residues 39-61 (YYGFLTALPIGPSQILSIRTFFL), 67-87 (GIICILGSMMGQFVILLSIYC), 90-110 (LYVMLVKPHLMTLLVIPYMFY), 138-158 (LLLDSFIFQLLNPILLPNPVL), 174-194 (FFLTSSLLGWLCGHILFINSI), and 220-240 (FSILISITFFLYLGRSPVPLI). Disordered stretches follow at residues 615 to 643 (GPRKGKLEDKEKEKEKAAQTQTEVKKERE) and 1431 to 1494 (TKEP…WKSK). Residues 618 to 660 (KGKLEDKEKEKEKAAQTQTEVKKEREKEKEERVIKRFQNQSDF) are a coiled coil. Positions 619-643 (GKLEDKEKEKEKAAQTQTEVKKERE) are enriched in basic and acidic residues.

It belongs to the TIC214 family. In terms of assembly, part of the Tic complex.

The protein localises to the plastid. The protein resides in the chloroplast inner membrane. Functionally, involved in protein precursor import into chloroplasts. May be part of an intermediate translocation complex acting as a protein-conducting channel at the inner envelope. The polypeptide is Protein TIC 214 (Psilotum nudum (Whisk fern)).